A 183-amino-acid chain; its full sequence is Peptide deformylase (183 aa).

Residues Cys111 and His154 each contribute to the Fe cation site. The active site involves Glu155. Residue His158 participates in Fe cation binding.

Requires Fe(2+) as cofactor.

It catalyses the reaction N-terminal N-formyl-L-methionyl-[peptide] + H2O = N-terminal L-methionyl-[peptide] + formate. Removes the formyl group from the N-terminal Met of newly synthesized proteins. Requires at least a dipeptide for an efficient rate of reaction. N-terminal L-methionine is a prerequisite for activity but the enzyme has broad specificity at other positions. This Staphylococcus aureus protein is Peptide deformylase.